Reading from the N-terminus, the 741-residue chain is MATKFPKFSQDLAQDPTTRRIWYAMAMGNDFESHDGMTEENLYQKIFATHFGHLAIIFLWASSLLFHVAWQGNFEQWIKDPLHVRPIAHAIWDPHFGKPAIEAFTQAGANGPVNIAYSGVYHWWYTIGMRTNTELYTGSVFLLLFASLFLFAGWLHLQPKFRPSLAWFKSAESRLNHHLAGLFGVSSLAWAGHLIHVAIPESRGQHVGWDNFLSTAPHPAGLQPFFTGNWGVYAQNPDTAGHIFSTSQGAGTAILTFLGGFHPQTESLWLTDMAHHHLAIAVLFIVAGHMYRTNFGIGHSIKEMMNAKTFFGKPVEGPFNMPHQGIYDTYNNSLHFQLGWHLACLGVVTSWVAQHMYSLPSYAFIAKDYTTQAALYTHHQYIAIFLMVGAFAHGAIFLVRDYDPEQNKGNVLERVLQHKEAIISHLSWVSLFLGFHTLGLYVHNDVVVAFGTPEKQILIEPVFAQFIQAAHGKVLYGLDTLLSNPDSVAYTAYPNYANVWLPGWLDAINSGTNSLFLTIGPGDFLVHHAIALGLHTTTLILVKGALDARGSKLMPDKKDFGYAFPCDGPGRGGTCDISAWDSFYLSLFWALNTVGWVTFYWHWKHLGIWQGNVAQFNENSTYLMGWFRDYLWANSAQLINGYNPYGVNNLSVWAWMFLFGHLVWATGFMFLISWRGYWQELIETLVWAHERTPIANLVRWKDKPVALSIVQARVVGLAHFTVGYVLTYAAFLIASTAGKFG.

Helical transmembrane passes span Ile46 to Ala69, Leu135 to Gln158, Leu175 to Ile199, Met273 to Tyr291, Leu334 to Tyr357, Ala373 to Val399, Ala421 to His443, and Phe524 to Val542. [4Fe-4S] cluster contacts are provided by Cys566 and Cys575. 2 helical membrane passes run Ser582–Trp603 and Leu650–Ile672. Chlorophyll a is bound by residues His661, Met669, and Tyr677. Phylloquinone is bound at residue Trp678. A helical transmembrane segment spans residues Val714–Ala734.

It belongs to the PsaA/PsaB family. As to quaternary structure, the PsaA/B heterodimer binds the P700 chlorophyll special pair and subsequent electron acceptors. PSI consists of a core antenna complex that captures photons, and an electron transfer chain that converts photonic excitation into a charge separation. The cyanobacterial PSI reaction center is composed of one copy each of PsaA,B,C,D,E,F,I,J,K,L,M and X, and forms trimeric complexes. It depends on PSI electron transfer chain: 5 chlorophyll a, 1 chlorophyll a', 2 phylloquinones and 3 4Fe-4S clusters. PSI core antenna: 90 chlorophyll a, 22 carotenoids, 3 phospholipids and 1 galactolipid. P700 is a chlorophyll a/chlorophyll a' dimer, A0 is one or more chlorophyll a, A1 is one or both phylloquinones and FX is a shared 4Fe-4S iron-sulfur center. as a cofactor.

It localises to the cellular thylakoid membrane. The catalysed reaction is reduced [plastocyanin] + hnu + oxidized [2Fe-2S]-[ferredoxin] = oxidized [plastocyanin] + reduced [2Fe-2S]-[ferredoxin]. PsaA and PsaB bind P700, the primary electron donor of photosystem I (PSI), as well as the electron acceptors A0, A1 and FX. PSI is a plastocyanin/cytochrome c6-ferredoxin oxidoreductase, converting photonic excitation into a charge separation, which transfers an electron from the donor P700 chlorophyll pair to the spectroscopically characterized acceptors A0, A1, FX, FA and FB in turn. Oxidized P700 is reduced on the lumenal side of the thylakoid membrane by plastocyanin or cytochrome c6. The chain is Photosystem I P700 chlorophyll a apoprotein A2 1 (psaB1) from Nostoc sp. (strain PCC 7120 / SAG 25.82 / UTEX 2576).